Consider the following 713-residue polypeptide: Calpain-1 catalytic subunit (713 aa).

A Calpain catalytic domain is found at 55–354 (LFQDEAFPPV…FTKLEICNLT (300 aa)). Ca(2+) contacts are provided by Q109 and D114. Catalysis depends on residues C115, H272, and N296. Residues D318 and E323 each coordinate Ca(2+). Position 354 is a phosphothreonine (T354). A domain III region spans residues 355-525 (PDALKSRTLR…KKAGTQELDD (171 aa)). The tract at residues 526 to 541 (QIQANLPDEKVLSEEE) is linker. 4 consecutive EF-hand domains span residues 540–575 (EEID…IISK), 584–617 (FSLE…NRIR), 614–649 (NRIR…AGFK), and 679–713 (VRLE…TMFA). Positions 542–712 (IDDNFKTLFS…LFKWLQLTMF (171 aa)) are domain IV. Residues D597, D599, N601, K603, E608, D627, D629, S631, S633, and E638 each coordinate Ca(2+).

Belongs to the peptidase C2 family. As to quaternary structure, forms a heterodimer with a small (regulatory) subunit CAPNS1. Requires Ca(2+) as cofactor. Post-translationally, undergoes calcium-induced successive autoproteolytic cleavages that generate a membrane-bound 78 kDa active form and an intracellular 75 kDa active form. Calpastatin reduces with high efficiency the transition from 78 kDa to 75 kDa calpain forms.

Its subcellular location is the cytoplasm. The protein resides in the cell membrane. It catalyses the reaction Broad endopeptidase specificity.. Its activity is regulated as follows. Activated by micromolar concentrations of calcium and inhibited by calpastatin. Functionally, calcium-regulated non-lysosomal thiol-protease which catalyzes limited proteolysis of substrates involved in cytoskeletal remodeling and signal transduction. Proteolytically cleaves CTBP1 at 'Asn-375', 'Gly-388' and 'His-410'. Cleaves and activates caspase-7 (CASP7). In Mus musculus (Mouse), this protein is Calpain-1 catalytic subunit.